The chain runs to 208 residues: Small ribosomal subunit protein uS4 (208 aa).

In terms of domain architecture, S4 RNA-binding spans 98 to 161 (RRLDNVVYRL…RKIPVLAEAQ (64 aa)).

It belongs to the universal ribosomal protein uS4 family. As to quaternary structure, part of the 30S ribosomal subunit. Contacts protein S5. The interaction surface between S4 and S5 is involved in control of translational fidelity.

One of the primary rRNA binding proteins, it binds directly to 16S rRNA where it nucleates assembly of the body of the 30S subunit. Functionally, with S5 and S12 plays an important role in translational accuracy. The polypeptide is Small ribosomal subunit protein uS4 (Desulfovibrio desulfuricans (strain ATCC 27774 / DSM 6949 / MB)).